A 279-amino-acid polypeptide reads, in one-letter code: MTARMEQRFADVAAEGRPVLVTYFMGGDPDFDTSLAIMKALRQAGADIIELGVPFSDPMADGPAIQLAGQRALKAGQSLAKTLELARLFRAEDQRTPIVLMGYYNPIYIYGVERFLADALEAGVDGLIVVDLPPEMDDELCIPALEKGISFIRLATPTTDDRRLPKVLENTSGFVYYVSMTGITGSALPDPSLIAGAVARIKAHTPLPVCVGFGVKTADHARAIGASADGVVVGTAIVNQIASSLTEEGRATEATVPGVEALVRGLAAGVRAARLAAAE.

Active-site proton acceptor residues include glutamate 50 and aspartate 61.

The protein belongs to the TrpA family. Tetramer of two alpha and two beta chains.

The catalysed reaction is (1S,2R)-1-C-(indol-3-yl)glycerol 3-phosphate + L-serine = D-glyceraldehyde 3-phosphate + L-tryptophan + H2O. It participates in amino-acid biosynthesis; L-tryptophan biosynthesis; L-tryptophan from chorismate: step 5/5. The alpha subunit is responsible for the aldol cleavage of indoleglycerol phosphate to indole and glyceraldehyde 3-phosphate. This is Tryptophan synthase alpha chain from Rhizobium meliloti (strain 1021) (Ensifer meliloti).